A 239-amino-acid chain; its full sequence is DNA oxidative demethylase ALKBH2 (239 aa).

The PCNA-binding motif lies at 3–7 (KFLVR). The interval 11 to 32 (RDLQGGGEEPAPTGGASGDLKS) is disordered. Substrate-binding positions include 80–82 (FGK) and 100–102 (YTF). The Fe2OG dioxygenase domain occupies 130–235 (TFNFVLVNRY…RVNLTFRKIL (106 aa)). Positions 137, 139, and 149 each coordinate 2-oxoglutarate. Residues His149 and Asp151 each coordinate Fe cation. Residue Asp152 participates in substrate binding. The 2-oxoglutarate site is built by His214, Arg226, Thr230, and Arg232. Residue His214 coordinates Fe cation.

The protein belongs to the alkB family. Interacts with PCNA homotrimer; this interaction is enhanced during the S-phase of the cell cycle. Interacts with nucleolar proteins NCL, UBTF and NPM1. Interacts with XRCC5-XRCC6 heterodimer. Fe(2+) is required as a cofactor. As to expression, detected in liver, testis and kidney (at protein level). Detected in heart and testis.

The protein resides in the nucleus. It localises to the nucleolus. Its subcellular location is the nucleoplasm. The catalysed reaction is a methylated nucleobase within DNA + 2-oxoglutarate + O2 = a nucleobase within DNA + formaldehyde + succinate + CO2. The enzyme catalyses an N(1)-methyl-2'-deoxyadenosine in double-stranded DNA + 2-oxoglutarate + O2 = a 2'-deoxyadenosine in double-stranded DNA + formaldehyde + succinate + CO2 + H(+). It carries out the reaction an N(1)-methyl-2'-deoxyadenosine in single-stranded DNA + 2-oxoglutarate + O2 = a 2'-deoxyadenosine in single-stranded DNA + formaldehyde + succinate + CO2 + H(+). It catalyses the reaction an N(3)-methyl-2'-deoxycytidine in double-stranded DNA + 2-oxoglutarate + O2 = a 2'-deoxycytidine in double-stranded DNA + formaldehyde + succinate + CO2 + H(+). The catalysed reaction is an N(3)-methyl-2'-deoxycytidine in single-stranded DNA + 2-oxoglutarate + O2 = a 2'-deoxycytidine in single-stranded DNA + formaldehyde + succinate + CO2 + H(+). The enzyme catalyses a 1,N(6)-etheno-2'-deoxyadenosine in double-stranded DNA + 2-oxoglutarate + O2 + H2O = a 2'-deoxyadenosine in double-stranded DNA + glyoxal + succinate + CO2. It carries out the reaction a 1,N(6)-etheno-2'-deoxyadenosine in single-stranded DNA + 2-oxoglutarate + O2 + H2O = a 2'-deoxyadenosine in single-stranded DNA + glyoxal + succinate + CO2. It catalyses the reaction a 3,N(4)-etheno-2'-deoxycytidine in double-stranded DNA + 2-oxoglutarate + O2 + H2O = a 2'-deoxycytidine in double-stranded DNA + glyoxal + succinate + CO2. The catalysed reaction is a 3,N(4)-etheno-2'-deoxycytidine in single-stranded DNA + 2-oxoglutarate + O2 + H2O = a 2'-deoxycytidine in single-stranded DNA + glyoxal + succinate + CO2. The enzyme catalyses a 1,N(2)-etheno-2'-deoxyguanosine in double-stranded DNA + 2-oxoglutarate + O2 + H2O = a 2'-deoxyguanosine in double-stranded DNA + glyoxal + succinate + CO2. Its activity is regulated as follows. Activated by magnesium ions. In terms of biological role, dioxygenase that repairs alkylated nucleic acid bases by direct reversal oxidative dealkylation. Can process both double-stranded (ds) and single-stranded (ss) DNA substrates, with a strong preference for dsDNA. Uses molecular oxygen, 2-oxoglutarate and iron as cofactors to oxidize the alkyl groups that are subsequently released as aldehydes, regenerating the undamaged bases. Probes the base pair stability, locates a weakened base pair and flips the damaged base to accommodate the lesion in its active site for efficient catalysis. Repairs monoalkylated bases, specifically N1-methyladenine and N3-methylcytosine, as well as higher order alkyl adducts such as bases modified with exocyclic bridged adducts known as etheno adducts including 1,N6-ethenoadenine, 3,N4-ethenocytosine and 1,N2-ethenoguanine. Acts as a gatekeeper of genomic integrity under alkylation stress. Efficiently repairs alkylated lesions in ribosomal DNA (rDNA). These lesions can cause ss- and dsDNA strand breaks that severely impair rDNA transcription. In a response mechanism to DNA damage, associates with PCNA at replication forks to repair alkylated adducts prior to replication. This chain is DNA oxidative demethylase ALKBH2 (Alkbh2), found in Mus musculus (Mouse).